Here is a 249-residue protein sequence, read N- to C-terminus: Putative type I specificity subunit S.MpnORF615P (249 aa).

Belongs to the type-I restriction system S methylase family. As to quaternary structure, the methyltransferase is composed of M and S polypeptides.

Its function is as follows. The specificity (S) subunit of a type I methyltransferase (MTase); this subunit dictates DNA sequence specificity. The single R subunit has multiple frameshifts and is probably not expressed. In Mycoplasma pneumoniae (strain ATCC 29342 / M129 / Subtype 1) (Mycoplasmoides pneumoniae), this protein is Putative type I specificity subunit S.MpnORF615P.